We begin with the raw amino-acid sequence, 314 residues long: Bifunctional pinoresinol-lariciresinol reductase 3 (314 aa).

Residues 11-17, R36, and K45 contribute to the NADP(+) site; that span reads GGTGFIG. Catalysis depends on K138, which acts as the Proton acceptor. Residue R142 participates in NADP(+) binding. Residue H272 coordinates substrate.

It belongs to the NmrA-type oxidoreductase family. Isoflavone reductase subfamily. Dimer.

The catalysed reaction is (-)-lariciresinol + NADP(+) = (-)-pinoresinol + NADPH + H(+). It catalyses the reaction (+)-secoisolariciresinol + NADP(+) = (-)-lariciresinol + NADPH + H(+). Functionally, reductase involved in lignan biosynthesis. Catalyzes the enantioselective sequential conversion of (-)-pinoresinol into (-)-lariciresinol and of (-)-lariciresinol into (+)-secoisolariciresinol. Abstracts the 4R-hydride from the NADPH cofactor during catalysis. The sequence is that of Bifunctional pinoresinol-lariciresinol reductase 3 from Thuja plicata (Western red-cedar).